The primary structure comprises 140 residues: Gas vesicle protein O (140 aa).

Residues 1–14 (MSDQGNEHANHDGI) show a composition bias toward basic and acidic residues. A disordered region spans residues 1-61 (MSDQGNEHAN…DSTIGLSDAQ (61 aa)). A compositionally biased stretch (polar residues) spans 39 to 56 (QTASDEAVSNQSPDSTIG).

This sequence belongs to the gas vesicle GvpO family. In terms of assembly, forms homodimers, forms a GvpN-GvpO heterodimer, interacts with GvpC, GvpF, GvpI and GvpL, might interact with GvpA.

The protein localises to the gas vesicle. It is found in the cytoplasm. In terms of biological role, a minor component of the gas vesicle (GV), may play a role in transcription and/or RNA stability and/or in GV assembly. Gas vesicles are small, hollow, gas filled protein structures found in some microorganisms. They allow positioning of halobacteria at the optimal depth for growth in the poorly aerated shallow brine pools of their habitat. Its function is as follows. Expression of a 9.5 kb mc-vac DNA fragment containing 2 divergently transcribed regions (gvpD-gvpE-gvpF-gvpG-gvpH-gvpI-gvpJ-gvpK-gvpL-gvpM and gvpA-gvpC-gvpN-gvpO) allows H.volcanii to produce gas vesicles. The polypeptide is Gas vesicle protein O (Haloferax mediterranei (strain ATCC 33500 / DSM 1411 / JCM 8866 / NBRC 14739 / NCIMB 2177 / R-4) (Halobacterium mediterranei)).